Consider the following 294-residue polypeptide: Ankyrin repeat and SOCS box protein 9 (294 aa).

Met-1 is modified (N-acetylmethionine). ANK repeat units lie at residues 35–64 (SDWS…AVNI), 68–97 (DHVS…QVNG), 101–130 (DWHT…SVQP), 133–162 (DLAS…NIDH), 166–195 (HLGT…DVNQ), and 198–227 (GQDS…DTQA). A Phosphoserine modification is found at Ser-51. Positions 240–294 (PPESPLAQLFLEREGPPSLMQLCRLRIRKCFGIQQHHKITKLVLPEDLKQFLLHL) constitute an SOCS box domain.

It belongs to the ankyrin SOCS box (ASB) family. As to quaternary structure, substrate-recognition component of the ECS(ASB9) complex, composed of ASB9, CUL5, ELOB, ELOC and RNF7/RBX2. Predominantly expressed in testis, kidney, and liver.

It localises to the mitochondrion. Its pathway is protein modification; protein ubiquitination. Its function is as follows. Substrate-recognition component of a cullin-5-RING E3 ubiquitin-protein ligase complex (ECS complex, also named CRL5 complex), which mediates the ubiquitination and subsequent proteasomal degradation of target proteins. The ECS(ASB9) complex catalyzes ubiquitination of creatine kinases CKB and CKMT1A. Functionally, does not interact with the Elongin BC complex, likely to be a negative regulator of isoform 1. This chain is Ankyrin repeat and SOCS box protein 9, found in Homo sapiens (Human).